The sequence spans 473 residues: Allene oxide synthase CYP74A2 (473 aa).

Heme b contacts are provided by Lys-88, His-119, and Lys-123. (13S)-hydroperoxy-(9Z,11E)-octadecadienoate is bound by residues Ser-199 and Lys-282. Residues Lys-424 and Cys-426 each coordinate heme b.

It belongs to the cytochrome P450 family. Heme b serves as cofactor.

The catalysed reaction is (13S)-hydroperoxy-(9Z,11E,15Z)-octadecatrienoate = (9Z,13S,15Z)-12,13-epoxyoctadeca-9,11,15-trienoate + H2O. The enzyme catalyses (13S)-hydroperoxy-(9Z,11E)-octadecadienoate = (9Z,13S)-12,13-epoxyoctadeca-9,11-dienoate + H2O. It participates in lipid metabolism; oxylipin biosynthesis. Functionally, cytochrome P450 enzyme involved in the biosynthesis of oxylipin jasmonates, important phytohormones acting as growth regulators and signaling molecules for plant defense. Functions as an allene oxide synthase that converts hydroperoxy fatty acids to unstable allene epoxides. Catalyzes the dehydration of 13-HPOTE ((13S)-hydroperoxy-(9Z,11E,15Z)-octadecatrienoate). Also catalyzes the dehydration of 13-HPODE ((13S)-hydroperoxy-(9Z,11E)-octadecadienoate). This chain is Allene oxide synthase CYP74A2, found in Parthenium argentatum (Guayule rubber plant).